The following is a 319-amino-acid chain: MDQLAQTEKYSPFRFFSAEQWSRFRADTPLTLSEDEFRRLRSLNDPVDLEEVKRIYLSLSRLLSAHVEASQLLFRQRQAFFNAVDIVKTPFIIGIAGSVAVGKSTTARVLKELLARWPSSPKVDLITTDGFLLPNEVLRRENLMERKGFPDSYDVGALLRFLSGIKSALPDVRAPVYSHLTYDVIPGEFVTIDRPDILIFEGINVLQPGKLPQDGKIVPFLSDFFDFAIYIDADEKLIHEWYISRFMRLRETAFRNPDSFFHRYSQLSEEAARAIAEGLWSNINLKNLRENILPTRARADLILRKGADHLVEEVALRKL.

97 to 104 (GSVAVGKS) is an ATP binding site.

This sequence belongs to the prokaryotic pantothenate kinase family.

The protein localises to the cytoplasm. The enzyme catalyses (R)-pantothenate + ATP = (R)-4'-phosphopantothenate + ADP + H(+). Its pathway is cofactor biosynthesis; coenzyme A biosynthesis; CoA from (R)-pantothenate: step 1/5. The polypeptide is Pantothenate kinase (Mesorhizobium japonicum (strain LMG 29417 / CECT 9101 / MAFF 303099) (Mesorhizobium loti (strain MAFF 303099))).